The chain runs to 206 residues: AT-hook motif nuclear-localized protein 28 (206 aa).

2 disordered regions span residues 1 to 21 and 160 to 206; these read METVGRPRGRPRGSKNKPKAP and TEEE…PSPY. The segment at residues 5 to 17 is a DNA-binding region (a.T hook); sequence GRPRGRPRGSKNK. Positions 7–18 are enriched in basic residues; it reads PRGRPRGSKNKP. One can recognise a PPC domain in the interval 27–173; the sequence is DPPMSPYILE…QRNSAEGEEE (147 aa).

It is found in the nucleus. Its function is as follows. Transcription factor that specifically binds AT-rich DNA sequences related to the nuclear matrix attachment regions (MARs). In Arabidopsis thaliana (Mouse-ear cress), this protein is AT-hook motif nuclear-localized protein 28.